The chain runs to 141 residues: Phosphoribosyl-AMP cyclohydrolase (141 aa).

D91 contacts Mg(2+). Position 92 (C92) interacts with Zn(2+). D93 and D95 together coordinate Mg(2+). Residues C110 and C117 each contribute to the Zn(2+) site.

Belongs to the PRA-CH family. As to quaternary structure, homodimer. Requires Mg(2+) as cofactor. The cofactor is Zn(2+).

Its subcellular location is the cytoplasm. It carries out the reaction 1-(5-phospho-beta-D-ribosyl)-5'-AMP + H2O = 1-(5-phospho-beta-D-ribosyl)-5-[(5-phospho-beta-D-ribosylamino)methylideneamino]imidazole-4-carboxamide. Its pathway is amino-acid biosynthesis; L-histidine biosynthesis; L-histidine from 5-phospho-alpha-D-ribose 1-diphosphate: step 3/9. Functionally, catalyzes the hydrolysis of the adenine ring of phosphoribosyl-AMP. This is Phosphoribosyl-AMP cyclohydrolase from Brucella anthropi (strain ATCC 49188 / DSM 6882 / CCUG 24695 / JCM 21032 / LMG 3331 / NBRC 15819 / NCTC 12168 / Alc 37) (Ochrobactrum anthropi).